The following is a 448-amino-acid chain: Exodeoxyribonuclease 7 large subunit (448 aa).

The protein belongs to the XseA family. Heterooligomer composed of large and small subunits.

It is found in the cytoplasm. The enzyme catalyses Exonucleolytic cleavage in either 5'- to 3'- or 3'- to 5'-direction to yield nucleoside 5'-phosphates.. Functionally, bidirectionally degrades single-stranded DNA into large acid-insoluble oligonucleotides, which are then degraded further into small acid-soluble oligonucleotides. This is Exodeoxyribonuclease 7 large subunit from Bacillus pumilus (strain SAFR-032).